The following is a 436-amino-acid chain: Glutamate-1-semialdehyde 2,1-aminomutase (436 aa).

N6-(pyridoxal phosphate)lysine is present on Lys269.

This sequence belongs to the class-III pyridoxal-phosphate-dependent aminotransferase family. HemL subfamily. Homodimer. Pyridoxal 5'-phosphate serves as cofactor.

Its subcellular location is the cytoplasm. It carries out the reaction (S)-4-amino-5-oxopentanoate = 5-aminolevulinate. It participates in porphyrin-containing compound metabolism; protoporphyrin-IX biosynthesis; 5-aminolevulinate from L-glutamyl-tRNA(Glu): step 2/2. Its pathway is porphyrin-containing compound metabolism; chlorophyll biosynthesis. The sequence is that of Glutamate-1-semialdehyde 2,1-aminomutase from Heliobacterium modesticaldum (strain ATCC 51547 / Ice1).